A 1116-amino-acid chain; its full sequence is Cation channel sperm-associated auxiliary subunit beta (1116 aa).

The Extracellular portion of the chain corresponds to 1-1053; the sequence is MESPLIYVSV…QIYVDEAPLP (1053 aa). Residues C35 and C60 are joined by a disulfide bond. N90, N100, N118, N226, and N321 each carry an N-linked (GlcNAc...) asparagine glycan. The cysteines at positions 189 and 302 are disulfide-linked. Residues C330 and C343 are joined by a disulfide bond. N618 and N690 each carry an N-linked (GlcNAc...) asparagine glycan. Disulfide bonds link C718–C816, C829–C1037, C911–C920, and C922–C937. 2 N-linked (GlcNAc...) asparagine glycosylation sites follow: N913 and N921. N-linked (GlcNAc...) asparagine glycans are attached at residues N1010 and N1015. Residues 1054–1076 form a helical membrane-spanning segment; the sequence is FPGHTLIAVATAVVLGGLIFIAF. Residues 1077–1116 lie on the Cytoplasmic side of the membrane; it reads MFQLQGIHPWRTFQRWIRRNQEKFSSISLSELIHRSKSEE.

In terms of assembly, component of the CatSper complex or CatSpermasome composed of the core pore-forming members CATSPER1, CATSPER2, CATSPER3 and CATSPER4 as well as auxiliary members CATSPERB, CATSPERG, CATSPERD, CATSPERE, CATSPERZ, C2CD6/CATSPERT, TMEM249, TMEM262 and EFCAB9. HSPA1 may be an additional auxiliary complex member. The core complex members CATSPER1, CATSPER2, CATSPER3 and CATSPER4 form a heterotetrameric channel. The auxiliary CATSPERB, CATSPERG, CATSPERD and CATSPERE subunits form a pavilion-like structure over the pore which stabilizes the complex through interactions with CATSPER4, CATSPER3, CATSPER1 and CATSPER2 respectively. TMEM262/CATSPERH interacts with CATSPERB, further stabilizing the complex. C2CD6/CATSPERT interacts at least with CATSPERD and is required for targeting the CatSper complex in the flagellar membrane.

Its subcellular location is the cell projection. It localises to the cilium. The protein localises to the flagellum membrane. Auxiliary component of the CatSper complex, a complex involved in sperm cell hyperactivation. Sperm cell hyperactivation is needed for sperm motility which is essential late in the preparation of sperm for fertilization. The chain is Cation channel sperm-associated auxiliary subunit beta from Homo sapiens (Human).